Consider the following 153-residue polypeptide: NAD(P)H-quinone oxidoreductase subunit N (153 aa).

It belongs to the complex I NdhN subunit family. In terms of assembly, NDH-1 can be composed of about 15 different subunits; different subcomplexes with different compositions have been identified which probably have different functions.

It is found in the cellular thylakoid membrane. It carries out the reaction a plastoquinone + NADH + (n+1) H(+)(in) = a plastoquinol + NAD(+) + n H(+)(out). The enzyme catalyses a plastoquinone + NADPH + (n+1) H(+)(in) = a plastoquinol + NADP(+) + n H(+)(out). Its function is as follows. NDH-1 shuttles electrons from an unknown electron donor, via FMN and iron-sulfur (Fe-S) centers, to quinones in the respiratory and/or the photosynthetic chain. The immediate electron acceptor for the enzyme in this species is believed to be plastoquinone. Couples the redox reaction to proton translocation, and thus conserves the redox energy in a proton gradient. Cyanobacterial NDH-1 also plays a role in inorganic carbon-concentration. The chain is NAD(P)H-quinone oxidoreductase subunit N from Synechococcus sp. (strain WH7803).